A 316-amino-acid chain; its full sequence is ATP synthase gamma chain (316 aa).

Belongs to the ATPase gamma chain family. As to quaternary structure, F-type ATPases have 2 components, CF(1) - the catalytic core - and CF(0) - the membrane proton channel. CF(1) has five subunits: alpha(3), beta(3), gamma(1), delta(1), epsilon(1). CF(0) has three main subunits: a, b and c.

It localises to the cellular thylakoid membrane. Produces ATP from ADP in the presence of a proton gradient across the membrane. The gamma chain is believed to be important in regulating ATPase activity and the flow of protons through the CF(0) complex. The protein is ATP synthase gamma chain of Prochlorococcus marinus (strain MIT 9211).